Consider the following 804-residue polypeptide: Leucine--tRNA ligase (804 aa).

Positions 40–51 match the 'HIGH' region motif; the sequence is PYPSGAGLHVGH. The 'KMSKS' region motif lies at 576 to 580; sequence KMSKS. Lys579 serves as a coordination point for ATP.

This sequence belongs to the class-I aminoacyl-tRNA synthetase family.

The protein resides in the cytoplasm. The catalysed reaction is tRNA(Leu) + L-leucine + ATP = L-leucyl-tRNA(Leu) + AMP + diphosphate. This is Leucine--tRNA ligase from Bacillus licheniformis (strain ATCC 14580 / DSM 13 / JCM 2505 / CCUG 7422 / NBRC 12200 / NCIMB 9375 / NCTC 10341 / NRRL NRS-1264 / Gibson 46).